The chain runs to 188 residues: FMN-dependent NADPH-azoreductase (188 aa).

The protein belongs to the azoreductase type 2 family. Homotetramer. The cofactor is FMN.

Functionally, catalyzes the reductive cleavage of azo bond in aromatic azo compounds to the corresponding amines. Requires NADPH, but not NADH, as an electron donor for its activity. The protein is FMN-dependent NADPH-azoreductase (azo1) of Staphylococcus aureus (strain MSSA476).